Consider the following 417-residue polypeptide: Serine hydroxymethyltransferase (417 aa).

Residues Leu-121 and 125 to 127 (GHL) contribute to the (6S)-5,6,7,8-tetrahydrofolate site. The residue at position 229 (Lys-229) is an N6-(pyridoxal phosphate)lysine. Residue 355 to 357 (SPF) participates in (6S)-5,6,7,8-tetrahydrofolate binding.

This sequence belongs to the SHMT family. As to quaternary structure, homodimer. Pyridoxal 5'-phosphate serves as cofactor.

It is found in the cytoplasm. The enzyme catalyses (6R)-5,10-methylene-5,6,7,8-tetrahydrofolate + glycine + H2O = (6S)-5,6,7,8-tetrahydrofolate + L-serine. Its pathway is one-carbon metabolism; tetrahydrofolate interconversion. The protein operates within amino-acid biosynthesis; glycine biosynthesis; glycine from L-serine: step 1/1. In terms of biological role, catalyzes the reversible interconversion of serine and glycine with tetrahydrofolate (THF) serving as the one-carbon carrier. This reaction serves as the major source of one-carbon groups required for the biosynthesis of purines, thymidylate, methionine, and other important biomolecules. Also exhibits THF-independent aldolase activity toward beta-hydroxyamino acids, producing glycine and aldehydes, via a retro-aldol mechanism. In Salmonella schwarzengrund (strain CVM19633), this protein is Serine hydroxymethyltransferase.